We begin with the raw amino-acid sequence, 318 residues long: Glutathione synthetase (318 aa).

In terms of domain architecture, ATP-grasp spans 124 to 310 (EKLFTAWFPE…ITGKLMDAIE (187 aa)). 150-207 (FREQHGDVILKPLDGMGGASIFRVKEGDPNLSVIIETLTNHGQNYCMAQTFVPDISNG) provides a ligand contact to ATP. Mg(2+) contacts are provided by E281 and N283.

Belongs to the prokaryotic GSH synthase family. Mg(2+) serves as cofactor. It depends on Mn(2+) as a cofactor.

It catalyses the reaction gamma-L-glutamyl-L-cysteine + glycine + ATP = glutathione + ADP + phosphate + H(+). It functions in the pathway sulfur metabolism; glutathione biosynthesis; glutathione from L-cysteine and L-glutamate: step 2/2. This chain is Glutathione synthetase, found in Vibrio cholerae serotype O1 (strain ATCC 39315 / El Tor Inaba N16961).